Consider the following 108-residue polypeptide: Large ribosomal subunit protein uL24 (108 aa).

Belongs to the universal ribosomal protein uL24 family. In terms of assembly, part of the 50S ribosomal subunit.

In terms of biological role, one of two assembly initiator proteins, it binds directly to the 5'-end of the 23S rRNA, where it nucleates assembly of the 50S subunit. One of the proteins that surrounds the polypeptide exit tunnel on the outside of the subunit. The chain is Large ribosomal subunit protein uL24 from Salinispora tropica (strain ATCC BAA-916 / DSM 44818 / JCM 13857 / NBRC 105044 / CNB-440).